The primary structure comprises 140 residues: Arsenate reductase (140 aa).

The active-site Nucleophile; cysteine thioarsenate intermediate is Cys-11.

The protein belongs to the ArsC family.

It carries out the reaction [glutaredoxin]-dithiol + arsenate + glutathione + H(+) = glutathionyl-S-S-[glutaredoxin] + arsenite + H2O. Functionally, involved in resistance to arsenate. Catalyzes the reduction of arsenate [As(V)] to arsenite [As(III)]. The resulting arsenite is then extruded from the cell via the aquaglyceroporin AqpS. Does not display antimonate reductase activity. This chain is Arsenate reductase, found in Rhizobium meliloti (strain 1021) (Ensifer meliloti).